We begin with the raw amino-acid sequence, 79 residues long: Small ribosomal subunit protein bS16 (79 aa).

Belongs to the bacterial ribosomal protein bS16 family.

The protein is Small ribosomal subunit protein bS16 of Oleidesulfovibrio alaskensis (strain ATCC BAA-1058 / DSM 17464 / G20) (Desulfovibrio alaskensis).